A 143-amino-acid chain; its full sequence is Anti-sigma F factor (143 aa).

It belongs to the anti-sigma-factor family.

The catalysed reaction is L-seryl-[protein] + ATP = O-phospho-L-seryl-[protein] + ADP + H(+). The enzyme catalyses L-threonyl-[protein] + ATP = O-phospho-L-threonyl-[protein] + ADP + H(+). Binds to sigma F and blocks its ability to form an RNA polymerase holoenzyme (E-sigma F). Phosphorylates SpoIIAA on a serine residue. This phosphorylation may enable SpoIIAA to act as an anti-anti-sigma factor that counteracts SpoIIAB and thus releases sigma F from inhibition. This chain is Anti-sigma F factor, found in Clostridium botulinum (strain Alaska E43 / Type E3).